A 324-amino-acid chain; its full sequence is D-alanine--D-alanine ligase (324 aa).

An ATP-grasp domain is found at 121 to 321 (NQYLKAFGVR…IKDVMTDIIE (201 aa)). 149-204 (MEKIGLPCFIKPSLGGSSFGVTKVKTKEQIQPAIVKAFEEAQEVLVEAFMEGTELT) serves as a coordination point for ATP. 3 residues coordinate Mg(2+): aspartate 275, glutamate 288, and asparagine 290.

The protein belongs to the D-alanine--D-alanine ligase family. Requires Mg(2+) as cofactor. The cofactor is Mn(2+).

The protein resides in the cytoplasm. It carries out the reaction 2 D-alanine + ATP = D-alanyl-D-alanine + ADP + phosphate + H(+). Its pathway is cell wall biogenesis; peptidoglycan biosynthesis. Cell wall formation. This chain is D-alanine--D-alanine ligase, found in Bacteroides thetaiotaomicron (strain ATCC 29148 / DSM 2079 / JCM 5827 / CCUG 10774 / NCTC 10582 / VPI-5482 / E50).